The sequence spans 398 residues: Dual-specificity RNA methyltransferase RlmN (398 aa).

Glu119 functions as the Proton acceptor in the catalytic mechanism. In terms of domain architecture, Radical SAM core spans Asp125–Asp364. An intrachain disulfide couples Cys132 to Cys369. Residues Cys139, Cys143, and Cys146 each coordinate [4Fe-4S] cluster. Residues Gly193–Glu194, Ser225, Ser247–His249, and Asn326 each bind S-adenosyl-L-methionine. Catalysis depends on Cys369, which acts as the S-methylcysteine intermediate.

The protein belongs to the radical SAM superfamily. RlmN family. The cofactor is [4Fe-4S] cluster.

It localises to the cytoplasm. It carries out the reaction adenosine(2503) in 23S rRNA + 2 reduced [2Fe-2S]-[ferredoxin] + 2 S-adenosyl-L-methionine = 2-methyladenosine(2503) in 23S rRNA + 5'-deoxyadenosine + L-methionine + 2 oxidized [2Fe-2S]-[ferredoxin] + S-adenosyl-L-homocysteine. It catalyses the reaction adenosine(37) in tRNA + 2 reduced [2Fe-2S]-[ferredoxin] + 2 S-adenosyl-L-methionine = 2-methyladenosine(37) in tRNA + 5'-deoxyadenosine + L-methionine + 2 oxidized [2Fe-2S]-[ferredoxin] + S-adenosyl-L-homocysteine. Specifically methylates position 2 of adenine 2503 in 23S rRNA and position 2 of adenine 37 in tRNAs. m2A2503 modification seems to play a crucial role in the proofreading step occurring at the peptidyl transferase center and thus would serve to optimize ribosomal fidelity. The sequence is that of Dual-specificity RNA methyltransferase RlmN from Serratia proteamaculans (strain 568).